We begin with the raw amino-acid sequence, 77 residues long: Translation initiation factor IF-1, chloroplastic (77 aa).

Residues 1 to 71 (MKEQKWIHEG…TRGRIIYRLR (71 aa)) form the S1-like domain.

This sequence belongs to the IF-1 family. In terms of assembly, component of the 30S ribosomal translation pre-initiation complex which assembles on the 30S ribosome in the order IF-2 and IF-3, IF-1 and N-formylmethionyl-tRNA(fMet); mRNA recruitment can occur at any time during PIC assembly.

It is found in the plastid. Its subcellular location is the chloroplast. In terms of biological role, one of the essential components for the initiation of protein synthesis. Stabilizes the binding of IF-2 and IF-3 on the 30S subunit to which N-formylmethionyl-tRNA(fMet) subsequently binds. Helps modulate mRNA selection, yielding the 30S pre-initiation complex (PIC). Upon addition of the 50S ribosomal subunit IF-1, IF-2 and IF-3 are released leaving the mature 70S translation initiation complex. This is Translation initiation factor IF-1, chloroplastic from Brexia madagascariensis.